The following is a 93-amino-acid chain: Small ribosomal subunit protein uS19m (93 aa).

Belongs to the universal ribosomal protein uS19 family. Component of the mitochondrial small ribosomal subunit (mt-SSU). Mature yeast 74S mitochondrial ribosomes consist of a small (37S) and a large (54S) subunit. The 37S small subunit contains a 15S ribosomal RNA (15S mt-rRNA) and at least 32 different proteins. The 54S large subunit contains a 21S rRNA (21S mt-rRNA) and at least 45 different proteins.

It localises to the mitochondrion. In terms of biological role, component of the mitochondrial ribosome (mitoribosome), a dedicated translation machinery responsible for the synthesis of mitochondrial genome-encoded proteins, including at least some of the essential transmembrane subunits of the mitochondrial respiratory chain. The mitoribosomes are attached to the mitochondrial inner membrane and translation products are cotranslationally integrated into the membrane. The sequence is that of Small ribosomal subunit protein uS19m (rsm19) from Schizosaccharomyces pombe (strain 972 / ATCC 24843) (Fission yeast).